Reading from the N-terminus, the 785-residue chain is Rho-GTPase-activating protein RGD3 (785 aa).

Ser2 carries the post-translational modification N-acetylserine. The F-BAR domain occupies Ile31 to Arg463. The disordered stretch occupies residues Ser313–Asn340. Residues Thr329–Ser339 show a composition bias toward basic and acidic residues. Positions Ile520–Glu702 constitute a Rho-GAP domain. Positions Thr732–Thr785 are disordered. Ser759 is modified (phosphoserine). Phosphothreonine occurs at positions 760, 762, and 763.

In terms of processing, phosphorylation at the C-terminus negatively regulates the activity and the polarized localization.

It is found in the cytoplasmic vesicle membrane. Its subcellular location is the cell membrane. The protein resides in the bud tip. It localises to the bud neck. Functionally, GTPase activating protein (GAP) for RHO3 and CDC42 that binds membranes through phosphatidylinositol 4,5-bisphosphate. Plays a key role in cell polarity. Modulates the RHO3 distribution at the plasma membrane and its polarity during growth. This is Rho-GTPase-activating protein RGD3 from Saccharomyces cerevisiae (strain ATCC 204508 / S288c) (Baker's yeast).